Here is a 388-residue protein sequence, read N- to C-terminus: Putative O-antigen polymerase (388 aa).

The next 9 helical transmembrane spans lie at 23-43 (IFYPAVCVNIIFALVLLGYEI), 57-77 (LIFLLCNVLTFTLSCLLTESV), 97-117 (VHNVGLLVISFSMIYICMRLS), 143-163 (NFSAYMQPIILTTFALFIWSK), 180-200 (IVFIFAIILNTGKQIVFMVII), 215-235 (VYLITAVGVLFSLYMLFLRGL), 312-332 (ISAELSYLMMVIHGCISGVLW), 338-358 (YISVKIFYSYFIYTFSFIFYH), and 361-381 (FMTNISSWIQITLCIIVFSQF).

It localises to the cell inner membrane. Its function is as follows. May function in vitro as a polymerase that catalyzes the polymerization of the O-antigen repeat units on the periplasmic face of the inner membrane, leading to the formation of the lipid-linked O-antigen molecule. However, E.coli K12 strains do not normally produce the O-antigen in vivo due to mutations in the rfb gene cluster. K12 strains are phenotypically rough, their lipopolysaccharide having a complete core structure, but no O-antigen. This is Putative O-antigen polymerase from Escherichia coli (strain K12).